The following is a 123-amino-acid chain: Small ribosomal subunit protein uS12 (123 aa).

Aspartate 89 is subject to 3-methylthioaspartic acid.

It belongs to the universal ribosomal protein uS12 family. In terms of assembly, part of the 30S ribosomal subunit. Contacts proteins S8 and S17. May interact with IF1 in the 30S initiation complex.

Functionally, with S4 and S5 plays an important role in translational accuracy. Its function is as follows. Interacts with and stabilizes bases of the 16S rRNA that are involved in tRNA selection in the A site and with the mRNA backbone. Located at the interface of the 30S and 50S subunits, it traverses the body of the 30S subunit contacting proteins on the other side and probably holding the rRNA structure together. The combined cluster of proteins S8, S12 and S17 appears to hold together the shoulder and platform of the 30S subunit. The polypeptide is Small ribosomal subunit protein uS12 (Anaeromyxobacter dehalogenans (strain 2CP-1 / ATCC BAA-258)).